The chain runs to 609 residues: Dihydroxy-acid dehydratase (609 aa).

Asp-81 is a binding site for Mg(2+). Residue Cys-122 participates in [2Fe-2S] cluster binding. Residues Asp-123 and Lys-124 each contribute to the Mg(2+) site. Residue Lys-124 is modified to N6-carboxylysine. Residue Cys-195 participates in [2Fe-2S] cluster binding. Mg(2+) is bound at residue Glu-491. The active-site Proton acceptor is the Ser-517.

The protein belongs to the IlvD/Edd family. Homodimer. It depends on [2Fe-2S] cluster as a cofactor. Mg(2+) is required as a cofactor.

The enzyme catalyses (2R)-2,3-dihydroxy-3-methylbutanoate = 3-methyl-2-oxobutanoate + H2O. It carries out the reaction (2R,3R)-2,3-dihydroxy-3-methylpentanoate = (S)-3-methyl-2-oxopentanoate + H2O. Its pathway is amino-acid biosynthesis; L-isoleucine biosynthesis; L-isoleucine from 2-oxobutanoate: step 3/4. It functions in the pathway amino-acid biosynthesis; L-valine biosynthesis; L-valine from pyruvate: step 3/4. Functions in the biosynthesis of branched-chain amino acids. Catalyzes the dehydration of (2R,3R)-2,3-dihydroxy-3-methylpentanoate (2,3-dihydroxy-3-methylvalerate) into 2-oxo-3-methylpentanoate (2-oxo-3-methylvalerate) and of (2R)-2,3-dihydroxy-3-methylbutanoate (2,3-dihydroxyisovalerate) into 2-oxo-3-methylbutanoate (2-oxoisovalerate), the penultimate precursor to L-isoleucine and L-valine, respectively. The chain is Dihydroxy-acid dehydratase from Acinetobacter baumannii (strain AB307-0294).